We begin with the raw amino-acid sequence, 599 residues long: Serine/threonine-protein kinase Nek1 (599 aa).

One can recognise a Protein kinase domain in the interval 4 to 258; the sequence is YEVLEQIGKG…AAELLKHPHL (255 aa). ATP contacts are provided by residues 10–18 and K33; that span reads IGKGAFGSA. D129 acts as the Proton acceptor in catalysis. Disordered stretches follow at residues 364 to 386, 461 to 482, and 504 to 542; these read SIVK…EPPK, SEDP…PQHC, and DDDD…DTSS. Low complexity predominate over residues 511–530; sequence DSSSGRNNAAAAASSRAGSS.

The protein belongs to the protein kinase superfamily. NEK Ser/Thr protein kinase family. NIMA subfamily. In terms of tissue distribution, expressed in anthers, pistils and leaves.

It catalyses the reaction L-seryl-[protein] + ATP = O-phospho-L-seryl-[protein] + ADP + H(+). It carries out the reaction L-threonyl-[protein] + ATP = O-phospho-L-threonyl-[protein] + ADP + H(+). May be involved in plant development processes. The sequence is that of Serine/threonine-protein kinase Nek1 from Oryza sativa subsp. japonica (Rice).